The following is a 124-amino-acid chain: Small ribosomal subunit protein uS12 (124 aa).

Asp-89 carries the 3-methylthioaspartic acid modification.

This sequence belongs to the universal ribosomal protein uS12 family. As to quaternary structure, part of the 30S ribosomal subunit. Contacts proteins S8 and S17. May interact with IF1 in the 30S initiation complex.

Its function is as follows. With S4 and S5 plays an important role in translational accuracy. Interacts with and stabilizes bases of the 16S rRNA that are involved in tRNA selection in the A site and with the mRNA backbone. Located at the interface of the 30S and 50S subunits, it traverses the body of the 30S subunit contacting proteins on the other side and probably holding the rRNA structure together. The combined cluster of proteins S8, S12 and S17 appears to hold together the shoulder and platform of the 30S subunit. This chain is Small ribosomal subunit protein uS12, found in Shewanella loihica (strain ATCC BAA-1088 / PV-4).